Consider the following 327-residue polypeptide: GMP reductase (327 aa).

The active-site Thioimidate intermediate is the cysteine 175. Residue 204 to 227 participates in NADP(+) binding; it reads IIADGGIRTHGDIAKSIRFGASMV.

Belongs to the IMPDH/GMPR family. GuaC type 2 subfamily.

The catalysed reaction is IMP + NH4(+) + NADP(+) = GMP + NADPH + 2 H(+). In terms of biological role, catalyzes the irreversible NADPH-dependent deamination of GMP to IMP. It functions in the conversion of nucleobase, nucleoside and nucleotide derivatives of G to A nucleotides, and in maintaining the intracellular balance of A and G nucleotides. The sequence is that of GMP reductase from Exiguobacterium sp. (strain ATCC BAA-1283 / AT1b).